The chain runs to 529 residues: Tyrosine-protein kinase Fgr (529 aa).

Gly2 carries N-myristoyl glycine lipidation. S-palmitoyl cysteine attachment occurs at residues Cys3 and Cys6. Tyr34 bears the Phosphotyrosine mark. The region spanning 77-138 (IGVTLFIALY…PSNYVAPVDS (62 aa)) is the SH3 domain. One can recognise an SH2 domain in the interval 144-241 (WYFGKIGRKD…GLCNLLIAPC (98 aa)). Position 208 is a phosphotyrosine (Tyr208). Ser218 carries the post-translational modification Phosphoserine. The Protein kinase domain maps to 263–516 (ITLERRLGTG…YLQSFLEDYF (254 aa)). ATP-binding positions include 269–277 (LGTGCFGDV) and Lys291. The active-site Proton acceptor is Asp382. Residue Tyr412 is modified to Phosphotyrosine. Position 523 is a phosphotyrosine; by SRC (Tyr523).

It belongs to the protein kinase superfamily. Tyr protein kinase family. SRC subfamily. As to quaternary structure, interacts with ITGB1, ITGB2, MS4A2/FCER1B, FCER1G, FCGR2A and/or FCGR2B. Interacts (via SH2 domain) with SYK (tyrosine phosphorylated). Interacts (via SH2 domain) with FLT3 (tyrosine phosphorylated). Interacts with PTK2/FAK1. Interacts (via SH2 domain) with HCLS1 (tyrosine phosphorylated by SYK). Interacts with SIRPA and PTPNS1. Interacts (not phosphorylated on tyrosine residues) with CBL; FGR tyrosine phosphorylation promotes dissociation. Interacts with PIK3R1 and FASLG. Interacts with CLNK. Ubiquitinated. Becomes ubiquitinated in response to ITGB2 signaling; this does not lead to degradation. Post-translationally, phosphorylated. Autophosphorylated on tyrosine residues. Becomes phosphorylated in response to FCGR2A and/or FCGR2B engagement, cell adhesion and signaling by ITGB2. Prior phosphorylation at Tyr-523 by SRC inhibits ulterior autophosphorylation at Tyr-412. As to expression, detected in neutrophils, monocytes and natural killer cells (at protein level). Detected in monocytes and large lymphocytes.

It is found in the cell membrane. The protein localises to the cell projection. Its subcellular location is the ruffle membrane. It localises to the cytoplasm. The protein resides in the cytosol. It is found in the cytoskeleton. The protein localises to the mitochondrion inner membrane. Its subcellular location is the mitochondrion intermembrane space. It catalyses the reaction L-tyrosyl-[protein] + ATP = O-phospho-L-tyrosyl-[protein] + ADP + H(+). Activated by autophosphorylation. Prior phosphorylation at Tyr-523 by SRC inhibits ulterior autophosphorylation at Tyr-412. Activated by phorbol myristate acetate, phosphatidic acid and poly-Lys. Binding (via SH2 domain) of HCLS1 that is already phosphorylated by SYK strongly increases kinase activity. Non-receptor tyrosine-protein kinase that transmits signals from cell surface receptors devoid of kinase activity and contributes to the regulation of immune responses, including neutrophil, monocyte, macrophage and mast cell functions, cytoskeleton remodeling in response to extracellular stimuli, phagocytosis, cell adhesion and migration. Promotes mast cell degranulation, release of inflammatory cytokines and IgE-mediated anaphylaxis. Acts downstream of receptors that bind the Fc region of immunoglobulins, such as MS4A2/FCER1B, FCGR2A and/or FCGR2B. Acts downstream of ITGB1 and ITGB2, and regulates actin cytoskeleton reorganization, cell spreading and adhesion. Depending on the context, activates or inhibits cellular responses. Functions as a negative regulator of ITGB2 signaling, phagocytosis and SYK activity in monocytes. Required for normal ITGB1 and ITGB2 signaling, normal cell spreading and adhesion in neutrophils and macrophages. Functions as a positive regulator of cell migration and regulates cytoskeleton reorganization via RAC1 activation. Phosphorylates SYK (in vitro) and promotes SYK-dependent activation of AKT1 and MAP kinase signaling. Phosphorylates PLD2 in antigen-stimulated mast cells, leading to PLD2 activation and the production of the signaling molecules lysophosphatidic acid and diacylglycerol. Promotes activation of PIK3R1. Phosphorylates FASLG, and thereby regulates its ubiquitination and subsequent internalization. Phosphorylates ABL1. Promotes phosphorylation of CBL, CTTN, PIK3R1, PTK2/FAK1, PTK2B/PYK2 and VAV2. Phosphorylates HCLS1 that has already been phosphorylated by SYK, but not unphosphorylated HCLS1. Together with CLNK, it acts as a negative regulator of natural killer cell-activating receptors and inhibits interferon-gamma production. This is Tyrosine-protein kinase Fgr (FGR) from Homo sapiens (Human).